A 442-amino-acid polypeptide reads, in one-letter code: U11/U12 small nuclear ribonucleoprotein 65 kDa protein (442 aa).

An RRM 1 domain is found at 28-102 (VTLLVRHLPD…KVLQVQRANK (75 aa)). Disordered stretches follow at residues 101 to 138 (NKPN…QILS), 200 to 242 (LALP…GRKR), and 290 to 317 (SKVT…DSNL). The segment covering 102 to 116 (KPNDNKKSRQIEESV) has biased composition (basic and acidic residues). A compositionally biased stretch (polar residues) spans 117–136 (TKGNAFSTVSTNNDSKSGQI). Over residues 200–209 (LALPTPPLPK) the composition is skewed to pro residues. Residues 297–307 (YKEESENEDPA) show a composition bias toward acidic residues. The 83-residue stretch at 352–434 (VVLYIKNLAK…KPMIIQFGRT (83 aa)) folds into the RRM 2 domain.

Component of the U11/U12 snRNPs that are part of the U12-type spliceosome. Forms a complex with U12 snRNA. Ubiquitous.

It is found in the nucleus. In terms of biological role, component of minor spliceosome required for U12-type intron splicing and alternative splicing of many introns. Binds specifically to U12 snRNA, which is necessary for branch-point site recognition. Required for normal plant development. The sequence is that of U11/U12 small nuclear ribonucleoprotein 65 kDa protein (SNRNP65) from Arabidopsis thaliana (Mouse-ear cress).